Here is a 932-residue protein sequence, read N- to C-terminus: RNA-binding protein 12 (932 aa).

The interval 97 to 116 (IPPANASRSGPPPSSGMSGR) is disordered. Residues 98–116 (PPANASRSGPPPSSGMSGR) show a composition bias toward low complexity. The region spanning 304 to 379 (LYVSVHGMPF…RYVEVSPATE (76 aa)) is the RRM 1 domain. Residues Ser-352 and Ser-375 each carry the phosphoserine modification. Composition is skewed to polar residues over residues 392–401 (KQNMGPSGQT) and 408–417 (LPRSKSPSGQ). The segment at 392-424 (KQNMGPSGQTHPPPQTLPRSKSPSGQKRSRSRS) is disordered. Residues Ser-420, Ser-422, and Ser-424 each carry the phosphoserine modification. Residues 430–507 (FCVYLKGLPF…RFIQVHPITK (78 aa)) form the RRM 2 domain. Ser-525 bears the Phosphoserine mark. Residues 717–734 (NGPPFNFPGNFGGSNAFG) are compositionally biased toward low complexity. The disordered stretch occupies residues 717–855 (NGPPFNFPGN…PGFASSSGKP (139 aa)). A compositionally biased stretch (gly residues) spans 783–811 (SGFGGGPQNFGNGPGSLGGPPGFGSGPPG). The segment covering 824 to 838 (AFGPGPGPGPGPGPG) has biased composition (pro residues). The RRM 3 domain maps to 856–932 (GPTVIKVQNM…PIGSRKVNLY (77 aa)).

The protein resides in the nucleus. The protein is RNA-binding protein 12 (RBM12) of Pongo abelii (Sumatran orangutan).